A 479-amino-acid chain; its full sequence is Ribosomal RNA small subunit methyltransferase F (479 aa).

Residues A125–K131, E149, D176, and D194 each bind S-adenosyl-L-methionine. C247 acts as the Nucleophile in catalysis.

It belongs to the class I-like SAM-binding methyltransferase superfamily. RsmB/NOP family.

The protein localises to the cytoplasm. The catalysed reaction is cytidine(1407) in 16S rRNA + S-adenosyl-L-methionine = 5-methylcytidine(1407) in 16S rRNA + S-adenosyl-L-homocysteine + H(+). Functionally, specifically methylates the cytosine at position 1407 (m5C1407) of 16S rRNA. This is Ribosomal RNA small subunit methyltransferase F from Escherichia coli (strain UTI89 / UPEC).